Consider the following 349-residue polypeptide: S-adenosylmethionine:tRNA ribosyltransferase-isomerase (349 aa).

It belongs to the QueA family. As to quaternary structure, monomer.

It localises to the cytoplasm. The enzyme catalyses 7-aminomethyl-7-carbaguanosine(34) in tRNA + S-adenosyl-L-methionine = epoxyqueuosine(34) in tRNA + adenine + L-methionine + 2 H(+). It participates in tRNA modification; tRNA-queuosine biosynthesis. Transfers and isomerizes the ribose moiety from AdoMet to the 7-aminomethyl group of 7-deazaguanine (preQ1-tRNA) to give epoxyqueuosine (oQ-tRNA). This is S-adenosylmethionine:tRNA ribosyltransferase-isomerase from Ruegeria sp. (strain TM1040) (Silicibacter sp.).